A 98-amino-acid polypeptide reads, in one-letter code: Citrate lyase acyl carrier protein (98 aa).

Ser-14 is subject to O-(phosphoribosyl dephospho-coenzyme A)serine.

The protein belongs to the CitD family. As to quaternary structure, oligomer with a subunit composition of (alpha,beta,gamma)6.

The protein resides in the cytoplasm. Its function is as follows. Covalent carrier of the coenzyme of citrate lyase. The polypeptide is Citrate lyase acyl carrier protein (Escherichia coli O127:H6 (strain E2348/69 / EPEC)).